Reading from the N-terminus, the 238-residue chain is Ribosomal RNA small subunit methyltransferase G (238 aa).

S-adenosyl-L-methionine is bound by residues Gly78, Phe83, 129-130 (AE), and Arg148. The tract at residues 216-238 (EKKKETPKKYPRKAGTPAKNPIK) is disordered.

Belongs to the methyltransferase superfamily. RNA methyltransferase RsmG family.

It localises to the cytoplasm. Its function is as follows. Specifically methylates the N7 position of a guanine in 16S rRNA. The protein is Ribosomal RNA small subunit methyltransferase G of Lactococcus lactis subsp. lactis (strain IL1403) (Streptococcus lactis).